We begin with the raw amino-acid sequence, 601 residues long: Elongation factor 4 (601 aa).

In terms of domain architecture, tr-type G spans 5-187 (EHIRNFSIIA…AIVERLPAPE (183 aa)). GTP contacts are provided by residues 17–22 (DHGKST) and 134–137 (NKVD).

The protein belongs to the TRAFAC class translation factor GTPase superfamily. Classic translation factor GTPase family. LepA subfamily.

Its subcellular location is the cell inner membrane. It carries out the reaction GTP + H2O = GDP + phosphate + H(+). Required for accurate and efficient protein synthesis under certain stress conditions. May act as a fidelity factor of the translation reaction, by catalyzing a one-codon backward translocation of tRNAs on improperly translocated ribosomes. Back-translocation proceeds from a post-translocation (POST) complex to a pre-translocation (PRE) complex, thus giving elongation factor G a second chance to translocate the tRNAs correctly. Binds to ribosomes in a GTP-dependent manner. This Nitratidesulfovibrio vulgaris (strain DSM 19637 / Miyazaki F) (Desulfovibrio vulgaris) protein is Elongation factor 4.